A 103-amino-acid polypeptide reads, in one-letter code: Large ribosomal subunit protein uL24 (103 aa).

Belongs to the universal ribosomal protein uL24 family. As to quaternary structure, part of the 50S ribosomal subunit.

In terms of biological role, one of two assembly initiator proteins, it binds directly to the 5'-end of the 23S rRNA, where it nucleates assembly of the 50S subunit. Functionally, one of the proteins that surrounds the polypeptide exit tunnel on the outside of the subunit. This Histophilus somni (strain 129Pt) (Haemophilus somnus) protein is Large ribosomal subunit protein uL24.